The primary structure comprises 381 residues: Probable cyclic AMP-AMP-GMP nucleotide synthase (381 aa).

2 residues coordinate GTP: S53 and R56. Residues D69 and D71 contribute to the active site. Residues D69 and D71 each contribute to the Mg(2+) site. R109 is a binding site for GTP. The active site involves D121. Residues D121 and D196 each coordinate Mg(2+). GTP is bound by residues R197, R204, T205, Q210, and R307. The tract at residues 348–381 (GTKFPFPGPQGGDRSGGFTAPTQPAEPQKTGRFA) is disordered.

Belongs to the CD-NTase family. D02 subfamily. Mg(2+) serves as cofactor.

It catalyses the reaction GTP + 2 ATP = 3',3',3'-cAAG + 3 diphosphate. Its function is as follows. Cyclic nucleotide synthase (second messenger synthase) of a CBASS antivirus system. CBASS (cyclic oligonucleotide-based antiphage signaling system) provides immunity against bacteriophage. The CD-NTase protein synthesizes cyclic nucleotides in response to infection; these serve as specific second messenger signals. The signals activate a diverse range of effectors, leading to bacterial cell death and thus abortive phage infection. Cyclic nucleotide synthase, synthesizes a tricyclic nucleotide with AMP and GMP moieties, probably 3',3',3'-cyclic AMP-AMP-GMP (3'3'3'-cAAG). Controls the activity of the associated CBASS effector protein. The chain is Probable cyclic AMP-AMP-GMP nucleotide synthase from Salmonella paratyphi B (Salmonella enterica subsp. enterica serovar Paratyphi B).